The sequence spans 359 residues: Peptide chain release factor 1 (359 aa).

Glutamine 235 is modified (N5-methylglutamine). The tract at residues 283 to 309 is disordered; sequence QKAESERSQARRSQVGSGDRSERIRTY.

It belongs to the prokaryotic/mitochondrial release factor family. Methylated by PrmC. Methylation increases the termination efficiency of RF1.

Its subcellular location is the cytoplasm. Functionally, peptide chain release factor 1 directs the termination of translation in response to the peptide chain termination codons UAG and UAA. The protein is Peptide chain release factor 1 of Brucella canis (strain ATCC 23365 / NCTC 10854 / RM-666).